The sequence spans 289 residues: Polyisoprenoid diphosphate/phosphate phosphohydrolase PLPP6 (289 aa).

The interval 1 to 81 (MQSPRRNAEG…SSQALPPQLP (81 aa)) is disordered. Residues 1–126 (MQSPRRNAEG…ESSSWGSMRP (126 aa)) lie on the Cytoplasmic side of the membrane. Ser-23, Ser-30, and Ser-64 each carry phosphoserine. A helical membrane pass occupies residues 127 to 147 (LMKLLEISGHGIPWLLGTLYC). The Lumenal portion of the chain corresponds to 148-158 (LSRSDSWAGRE). A helical transmembrane segment spans residues 159-179 (VLMNLLFALLLDLLLVSLIKG). The segment at 178–186 (KGLVRRRRP) is phosphatase sequence motif I. Residues 180–222 (LVRRRRPAHNQMDMFFTISVDKYSFPSGHTTRAALVSRFILNH) are Cytoplasmic-facing. The segment at 205–208 (PSGH) is phosphatase sequence motif II. The active-site Proton donors is the His-208. Residues 223–243 (LVLAIPLRVLVVLWAFILGLS) traverse the membrane as a helical segment. The tract at residues 243-254 (SRVMLGRHNVTD) is phosphatase sequence motif III. Residues 244–254 (RVMLGRHNVTD) lie on the Lumenal side of the membrane. The Nucleophile role is filled by His-250. The helical transmembrane segment at 255 to 275 (VAFGFFLGYMQYSIVDYCWLS) threads the bilayer. Over 276-289 (PRTAPVLFVLWNQP) the chain is Cytoplasmic.

The protein belongs to the PA-phosphatase related phosphoesterase family. In terms of processing, phosphorylation by PKC activates the phosphatase activity towards presqualene diphosphate.

The protein resides in the endoplasmic reticulum membrane. The protein localises to the nucleus envelope. Its subcellular location is the nucleus inner membrane. The enzyme catalyses presqualene diphosphate + H2O = presqualene phosphate + phosphate + H(+). It catalyses the reaction presqualene phosphate + H2O = presqualene alcohol + phosphate. The catalysed reaction is (2E,6E)-farnesyl diphosphate + H2O = (2E,6E)-farnesyl phosphate + phosphate + H(+). It carries out the reaction (2E,6E)-farnesyl phosphate + H2O = (2E,6E)-farnesol + phosphate. The enzyme catalyses (2E,6E,10E)-geranylgeranyl diphosphate + H2O = (2E,6E,10E)-geranylgeranyl phosphate + phosphate + H(+). It catalyses the reaction (2E,6E,10E)-geranylgeranyl phosphate + H2O = (2E,6E,10E)-geranylgeraniol + phosphate. The catalysed reaction is (2E)-geranyl diphosphate + H2O = (2E)-geranyl phosphate + phosphate + H(+). It carries out the reaction (2E)-geranyl phosphate + H2O = (2E)-geraniol + phosphate. The enzyme catalyses 1,2-dihexadecanoyl-sn-glycero-3-phosphate + H2O = 1,2-dihexadecanoyl-sn-glycerol + phosphate. Its function is as follows. Magnesium-independent polyisoprenoid diphosphatase that catalyzes the sequential dephosphorylation of presqualene, farnesyl, geranyl and geranylgeranyl diphosphates. Functions in the innate immune response through the dephosphorylation of presqualene diphosphate which acts as a potent inhibitor of the signaling pathways contributing to polymorphonuclear neutrophils activation. May regulate the biosynthesis of cholesterol and related sterols by dephosphorylating presqualene and farnesyl diphosphate, two key intermediates in this biosynthetic pathway. May also play a role in protein prenylation by acting on farnesyl diphosphate and its derivative geranylgeranyl diphosphate, two precursors for the addition of isoprenoid anchors to membrane proteins. Has a lower activity towards phosphatidic acid (PA), but through phosphatidic acid dephosphorylation may participate in the biosynthesis of phospholipids and triacylglycerols. May also act on ceramide-1-P, lysophosphatidic acid (LPA) and sphing-4-enine 1-phosphate/sphingosine-1-phosphate. The sequence is that of Polyisoprenoid diphosphate/phosphate phosphohydrolase PLPP6 from Bos taurus (Bovine).